The chain runs to 941 residues: Isoleucine--tRNA ligase (941 aa).

Positions 58 to 68 (PYANGNIHIGH) match the 'HIGH' region motif. L-isoleucyl-5'-AMP is bound at residue Glu564. The 'KMSKS' region signature appears at 605–609 (KMSKS). Lys608 lines the ATP pocket. Zn(2+) contacts are provided by Cys904, Cys907, Cys924, and Cys927.

This sequence belongs to the class-I aminoacyl-tRNA synthetase family. IleS type 1 subfamily. In terms of assembly, monomer. It depends on Zn(2+) as a cofactor.

It localises to the cytoplasm. The catalysed reaction is tRNA(Ile) + L-isoleucine + ATP = L-isoleucyl-tRNA(Ile) + AMP + diphosphate. Its function is as follows. Catalyzes the attachment of isoleucine to tRNA(Ile). As IleRS can inadvertently accommodate and process structurally similar amino acids such as valine, to avoid such errors it has two additional distinct tRNA(Ile)-dependent editing activities. One activity is designated as 'pretransfer' editing and involves the hydrolysis of activated Val-AMP. The other activity is designated 'posttransfer' editing and involves deacylation of mischarged Val-tRNA(Ile). The chain is Isoleucine--tRNA ligase from Buchnera aphidicola subsp. Cinara cedri (strain Cc).